A 312-amino-acid polypeptide reads, in one-letter code: 2-aminophenol 1,6-dioxygenase subunit beta (312 aa).

Residues H13, H62, and E251 each coordinate Fe cation.

Belongs to the LigB/MhpB extradiol dioxygenase family. In terms of assembly, the APD complex is a heterotetramer of 2 alpha (CnbCa) and 2 beta (CnbCb) subunits. Fe(2+) is required as a cofactor.

The enzyme catalyses 2-aminophenol + O2 = 2-aminomuconate 6-semialdehyde. It catalyses the reaction 2-amino-5-chlorophenol + O2 = 2-amino-5-chloromuconate 6-semialdehyde. The protein operates within xenobiotic degradation; nitrobenzene degradation. It functions in the pathway xenobiotic degradation; 4-chloronitrobenzene degradation. Its activity is regulated as follows. Complete loss of activity in the presence of Ni(2+), Co(2+), Cd(2+), Zn(2+) and hydrogen peroxide, however activity with hydrogen peroxide partially restored upon addition of excess ascorbate. Partially inhibited by Fe(2+), Mg(2+), Ca(2+), Mn(2+), Cu(2+) and also by EDTA, at 2 mM concentration. Total activity inhibited in the presence of catechol or 4-nitrocatechol but completely restored after removal of catechol and addition of 2 mM Fe(2+) and 5 mM ascorbate. Functionally, component of the 2-aminophenol 1,6-dioxygenase (APD) complex that catalyzes the ring fission of 2-aminophenol to produce 2-aminomuconic semialdehyde. CnbCb seems to be the catalytic subunit of the complex. Also active on other substrates such as 2-amino-5-chlorophenol (68% activity), protocatechuate (33% activity) and catechol (5% activity). Both 2-aminophenol and 2-amino-5-cholorophenol are likely native substrates for this dioxygenase which is involved in the reductive degradation pathway of both nitrobenzene (NB) and 4-chloronitrobenzene (4-CNB), allowing C.testosteroni strain CNB-1 to grow on these compounds as sole source of carbon, nitrogen, and energy. This Comamonas testosteroni (Pseudomonas testosteroni) protein is 2-aminophenol 1,6-dioxygenase subunit beta.